The primary structure comprises 675 residues: Transmembrane protein 232 (675 aa).

Residues 163–183 (LVKIGYLIFLRLFVFFLHGHL) form a helical membrane-spanning segment. The stretch at 598–634 (WQKDMEARKREEEAYKAQNQKDKEEKEKIHFQEIMKQ) forms a coiled coil. Residues 605-624 (RKREEEAYKAQNQKDKEEKE) are disordered.

As to expression, high expression in the testis and weak expression levels in the spleen, liver, brain, uterus, lung, epididymis and kidney. Not detected in the heart or ovary.

The protein localises to the membrane. Its function is as follows. Plays a critical role for male fertility and sperm motility by regulating sperm cytoplasm removal and maintaining axoneme integrity. This is Transmembrane protein 232 (Tmem232) from Mus musculus (Mouse).